Consider the following 424-residue polypeptide: Histidine--tRNA ligase (424 aa).

The protein belongs to the class-II aminoacyl-tRNA synthetase family. As to quaternary structure, homodimer.

It is found in the cytoplasm. The enzyme catalyses tRNA(His) + L-histidine + ATP = L-histidyl-tRNA(His) + AMP + diphosphate + H(+). The chain is Histidine--tRNA ligase from Shewanella denitrificans (strain OS217 / ATCC BAA-1090 / DSM 15013).